Here is a 445-residue protein sequence, read N- to C-terminus: Exodeoxyribonuclease 7 large subunit (445 aa).

This sequence belongs to the XseA family. Heterooligomer composed of large and small subunits.

The protein localises to the cytoplasm. It carries out the reaction Exonucleolytic cleavage in either 5'- to 3'- or 3'- to 5'-direction to yield nucleoside 5'-phosphates.. In terms of biological role, bidirectionally degrades single-stranded DNA into large acid-insoluble oligonucleotides, which are then degraded further into small acid-soluble oligonucleotides. The polypeptide is Exodeoxyribonuclease 7 large subunit (Staphylococcus haemolyticus (strain JCSC1435)).